The primary structure comprises 604 residues: Elongation factor 4 (604 aa).

The tr-type G domain maps to 4–186 (EFIRNFSIIA…AIVHLVPPPK (183 aa)). GTP-binding positions include 16–21 (DHGKST) and 133–136 (NKID).

It belongs to the TRAFAC class translation factor GTPase superfamily. Classic translation factor GTPase family. LepA subfamily.

It is found in the cell inner membrane. It catalyses the reaction GTP + H2O = GDP + phosphate + H(+). Required for accurate and efficient protein synthesis under certain stress conditions. May act as a fidelity factor of the translation reaction, by catalyzing a one-codon backward translocation of tRNAs on improperly translocated ribosomes. Back-translocation proceeds from a post-translocation (POST) complex to a pre-translocation (PRE) complex, thus giving elongation factor G a second chance to translocate the tRNAs correctly. Binds to ribosomes in a GTP-dependent manner. This Solibacter usitatus (strain Ellin6076) protein is Elongation factor 4.